A 557-amino-acid chain; its full sequence is Formate--tetrahydrofolate ligase (557 aa).

Thr-67–Thr-74 contacts ATP.

The protein belongs to the formate--tetrahydrofolate ligase family.

The catalysed reaction is (6S)-5,6,7,8-tetrahydrofolate + formate + ATP = (6R)-10-formyltetrahydrofolate + ADP + phosphate. It functions in the pathway one-carbon metabolism; tetrahydrofolate interconversion. In Cereibacter sphaeroides (strain ATCC 17025 / ATH 2.4.3) (Rhodobacter sphaeroides), this protein is Formate--tetrahydrofolate ligase.